Consider the following 139-residue polypeptide: Putative pre-16S rRNA nuclease (139 aa).

The protein belongs to the YqgF nuclease family.

It localises to the cytoplasm. In terms of biological role, could be a nuclease involved in processing of the 5'-end of pre-16S rRNA. The protein is Putative pre-16S rRNA nuclease of Caldanaerobacter subterraneus subsp. tengcongensis (strain DSM 15242 / JCM 11007 / NBRC 100824 / MB4) (Thermoanaerobacter tengcongensis).